The following is a 1685-amino-acid chain: PHD and RING finger domain-containing protein 1 (1685 aa).

The segment at 1–82 is disordered; sequence MDDDNLDELV…GSEDSEDGIE (82 aa). A compositionally biased stretch (acidic residues) spans 41–81; sequence DSEDDTGSEQDDDTDGEETEGLSEEEDPEDRSGSEDSEDGI. An RING-type; degenerate zinc finger spans residues 109–150; sequence CPICLNAFRDQAVGTPETCAHYFCLDCIIEWSRNANSCPVDR. The PHD-type zinc-finger motif lies at 188–238; it reads PTFCEVCGRSDREDRLLLCDGCDAGYHMECLDPPLQEVPVDEWFCPECAVP. 5 disordered regions span residues 333–390, 449–483, 537–590, 606–777, and 809–860; these read PLTP…KLKN, DSNGEQSADPPSPLSAKRRVLSRSALQSHQPVARP, SAKR…GLSC, TPVR…GSSF, and KVQR…LLPS. The residue at position 335 (Thr-335) is a Phosphothreonine. 2 stretches are compositionally biased toward basic residues: residues 339 to 364 and 372 to 387; these read PAKRKRKAGRRKKVLGRKKTRSRSSV and RAKKRQHRVRRTKGRK. Phosphoserine is present on residues Ser-450 and Ser-460. Composition is skewed to polar residues over residues 606–625 and 637–662; these read TPVRSDSSVTPRSGLSGNLS and SPRLNGSNVRVGSASTKTMTHSNFPS. The segment covering 671–682 has biased composition (basic and acidic residues); the sequence is QKTDPRRPDFSK. Polar residues-rich tracts occupy residues 694 to 709 and 737 to 751; these read SNSTQDQAPASGQTVE and SSRGPQETGSHTSGS. 9 positions are modified to phosphoserine: Ser-817, Ser-848, Ser-849, Ser-867, Ser-870, Ser-922, Ser-948, Ser-984, and Ser-1002. Residues 835–860 show a composition bias toward low complexity; the sequence is PFDPTGSDSSPPSSSPESLGSGLLPS. Disordered stretches follow at residues 892–1229, 1290–1355, and 1369–1390; these read GTEM…VSEV, QLDD…APSD, and TTLSTPGVLPMGKDSPLLSGRG. Over residues 922 to 934 the composition is skewed to acidic residues; that stretch reads SDLEQEGLGEIEP. Over residues 1001–1010 the composition is skewed to low complexity; that stretch reads SSRSRSTSSS. 2 stretches are compositionally biased toward basic residues: residues 1011–1031 and 1054–1064; these read RSRKKTKKKKKVAREHQRTRS and KRHRAKTKSRR. Residues 1065–1075 are compositionally biased toward basic and acidic residues; it reads SSSDRASSQDR. 2 stretches are compositionally biased toward basic residues: residues 1089-1102 and 1117-1129; these read GPWGHGRCWRKSRS and SRRRKRRHSGSRS. Basic and acidic residues-rich tracts occupy residues 1130-1143 and 1151-1165; these read RGRDGSPHSSLERD and RSRERMDKKESMTRS. A phosphoserine mark is found at Ser-1135 and Ser-1139. A compositionally biased stretch (basic residues) spans 1181–1191; sequence RTRRPHSREKH. Residues 1192–1201 show a composition bias toward basic and acidic residues; that stretch reads PHSPEKKGAV. Ser-1205 is subject to Phosphoserine. Over residues 1292 to 1305 the composition is skewed to low complexity; that stretch reads DDMSSPPSPESTDS. Phosphoserine is present on residues Ser-1372 and Ser-1383. At Thr-1416 the chain carries Phosphothreonine. Disordered regions lie at residues 1421–1448, 1466–1501, and 1569–1591; these read EAEASTPALDRDPRTPLQRPQRPQEGDW, LPPPIHVLQESGLPDADPSQPPGVPRAEGPPAVGTL, and LAVPTTNNSEERTATPKTAAEKT. Residues 1577 to 1591 show a composition bias toward basic and acidic residues; it reads SEERTATPKTAAEKT. Residues 1589–1615 are a coiled coil; that stretch reads EKTKKEEYMKKLHMQERAVEEVKLAIK.

Interacts with POLR2A (via the C-terminal domain).

In Rattus norvegicus (Rat), this protein is PHD and RING finger domain-containing protein 1.